Reading from the N-terminus, the 424-residue chain is Phosphomethylpyrimidine synthase 2 (424 aa).

Substrate-binding positions include asparagine 65, methionine 94, tyrosine 123, histidine 162, 184–186 (SRG), 225–228 (DGLR), and glutamate 264. Histidine 268 contacts Zn(2+). Tyrosine 291 serves as a coordination point for substrate. Histidine 332 is a binding site for Zn(2+). Cysteine 408, cysteine 411, and cysteine 415 together coordinate [4Fe-4S] cluster.

Belongs to the ThiC family. [4Fe-4S] cluster is required as a cofactor.

The enzyme catalyses 5-amino-1-(5-phospho-beta-D-ribosyl)imidazole + S-adenosyl-L-methionine = 4-amino-2-methyl-5-(phosphooxymethyl)pyrimidine + CO + 5'-deoxyadenosine + formate + L-methionine + 3 H(+). Its pathway is cofactor biosynthesis; thiamine diphosphate biosynthesis. In terms of biological role, catalyzes the synthesis of the hydroxymethylpyrimidine phosphate (HMP-P) moiety of thiamine from aminoimidazole ribotide (AIR) in a radical S-adenosyl-L-methionine (SAM)-dependent reaction. The chain is Phosphomethylpyrimidine synthase 2 from Methanothermobacter thermautotrophicus (strain ATCC 29096 / DSM 1053 / JCM 10044 / NBRC 100330 / Delta H) (Methanobacterium thermoautotrophicum).